A 446-amino-acid chain; its full sequence is Chromosomal replication initiator protein DnaA (446 aa).

The segment at 1–81 (MENISDLWNS…AKLAIRFIIP (81 aa)) is domain I, interacts with DnaA modulators. Residues 81-109 (PQSQAEEDIDLPPVKPNPAQDDSAHLPQS) form a domain II region. A domain III, AAA+ region region spans residues 110–326 (MLNPKYTFDT…GALIRVVAYS (217 aa)). Residues G154, G156, K157, and T158 each contribute to the ATP site. A domain IV, binds dsDNA region spans residues 327-446 (SLINKDINAD…QVEEINGILK (120 aa)).

It belongs to the DnaA family. Oligomerizes as a right-handed, spiral filament on DNA at oriC.

The protein resides in the cytoplasm. In terms of biological role, plays an essential role in the initiation and regulation of chromosomal replication. ATP-DnaA binds to the origin of replication (oriC) to initiate formation of the DNA replication initiation complex once per cell cycle. Binds the DnaA box (a 9 base pair repeat at the origin) and separates the double-stranded (ds)DNA. Forms a right-handed helical filament on oriC DNA; dsDNA binds to the exterior of the filament while single-stranded (ss)DNA is stabiized in the filament's interior. The ATP-DnaA-oriC complex binds and stabilizes one strand of the AT-rich DNA unwinding element (DUE), permitting loading of DNA polymerase. After initiation quickly degrades to an ADP-DnaA complex that is not apt for DNA replication. Binds acidic phospholipids. The polypeptide is Chromosomal replication initiator protein DnaA (Bacillus cereus (strain B4264)).